Reading from the N-terminus, the 494-residue chain is Protein nucleotidyltransferase YdiU (494 aa).

ATP is bound by residues Gly90, Gly92, Arg93, Lys113, Asp125, Gly126, Arg176, and Arg183. Catalysis depends on Asp252, which acts as the Proton acceptor. 2 residues coordinate Mg(2+): Asn253 and Asp262. Asp262 contributes to the ATP binding site.

Belongs to the SELO family. Mg(2+) serves as cofactor. Requires Mn(2+) as cofactor.

It catalyses the reaction L-seryl-[protein] + ATP = 3-O-(5'-adenylyl)-L-seryl-[protein] + diphosphate. The enzyme catalyses L-threonyl-[protein] + ATP = 3-O-(5'-adenylyl)-L-threonyl-[protein] + diphosphate. The catalysed reaction is L-tyrosyl-[protein] + ATP = O-(5'-adenylyl)-L-tyrosyl-[protein] + diphosphate. It carries out the reaction L-histidyl-[protein] + UTP = N(tele)-(5'-uridylyl)-L-histidyl-[protein] + diphosphate. It catalyses the reaction L-seryl-[protein] + UTP = O-(5'-uridylyl)-L-seryl-[protein] + diphosphate. The enzyme catalyses L-tyrosyl-[protein] + UTP = O-(5'-uridylyl)-L-tyrosyl-[protein] + diphosphate. Nucleotidyltransferase involved in the post-translational modification of proteins. It can catalyze the addition of adenosine monophosphate (AMP) or uridine monophosphate (UMP) to a protein, resulting in modifications known as AMPylation and UMPylation. In Alkalilimnicola ehrlichii (strain ATCC BAA-1101 / DSM 17681 / MLHE-1), this protein is Protein nucleotidyltransferase YdiU.